Reading from the N-terminus, the 265-residue chain is Synaptoporin (265 aa).

At Met1 to Val4 the chain is on the cytoplasmic side. One can recognise an MARVEL domain in the interval Met1–Gly202. A helical membrane pass occupies residues Ile5–Leu25. Topologically, residues Arg26 to Phe81 are vesicular. Residues Asn33 and Asn38 are each glycosylated (N-linked (GlcNAc...) asparagine). Residues Phe82–Phe102 traverse the membrane as a helical segment. The Cytoplasmic segment spans residues Phe103 to Pro114. Residues Leu115–Trp135 form a helical membrane-spanning segment. Over Ala136–Asn177 the chain is Vesicular. N-linked (GlcNAc...) asparagine glycosylation occurs at Asn177. The chain crosses the membrane as a helical span at residues Thr178–Phe198. Topologically, residues Lys199 to Ile265 are cytoplasmic. Repeat unit 1 spans residues Tyr210–Pro214. The 5 X approximate repeats stretch occupies residues Tyr210 to Ala242. 2 positions are modified to phosphoserine: Ser212 and Ser220. The disordered stretch occupies residues Ser221–Ile265. A run of 4 repeats spans residues Tyr222–Gly226, Tyr227–Ser231, Tyr232–Gly236, and Tyr238–Ala242. A compositionally biased stretch (low complexity) spans Gln224–Ser243. The segment covering Leu244–Ile265 has biased composition (polar residues).

It belongs to the synaptophysin/synaptobrevin family. Central nervous system.

The protein localises to the cytoplasmic vesicle. It localises to the secretory vesicle. It is found in the synaptic vesicle membrane. The protein resides in the synapse. Its subcellular location is the synaptosome. Functionally, intrinsic membrane protein of small synaptic vesicles. Probable vesicular channel protein. The sequence is that of Synaptoporin (Synpr) from Rattus norvegicus (Rat).